Here is a 494-residue protein sequence, read N- to C-terminus: UPF0371 protein SEQ_1471 (494 aa).

The protein belongs to the UPF0371 family.

This chain is UPF0371 protein SEQ_1471, found in Streptococcus equi subsp. equi (strain 4047).